A 262-amino-acid polypeptide reads, in one-letter code: NADP-dependent mannitol dehydrogenase (262 aa).

Isoleucine 23, aspartate 69, asparagine 96, and arginine 129 together coordinate NADP(+). The active-site Proton donor is the serine 149. NADP(+)-binding residues include tyrosine 169, lysine 173, valine 202, threonine 204, and glutamine 206. Tyrosine 169 functions as the Proton acceptor in the catalytic mechanism. Lysine 173 serves as the catalytic Lowers pKa of active site Tyr.

This sequence belongs to the short-chain dehydrogenases/reductases (SDR) family. Homotetramer.

The enzyme catalyses D-mannitol + NADP(+) = D-fructose + NADPH + H(+). This Agaricus bisporus (White button mushroom) protein is NADP-dependent mannitol dehydrogenase (mtdH).